The chain runs to 776 residues: Protein FAM83C (776 aa).

The tract at residues Met-1 to Gly-340 is DUF1669. Disordered regions lie at residues Asn-344–Pro-467, Ser-494–His-565, His-617–Arg-653, Pro-669–Ala-694, and Gln-716–Pro-745. The segment covering Ser-368–Ser-385 has biased composition (low complexity). A compositionally biased stretch (polar residues) spans Pro-452 to Pro-467. Basic and acidic residues predominate over residues Val-523 to Arg-539. The segment covering Ser-554 to Leu-563 has biased composition (polar residues).

The protein belongs to the FAM83 family. As to quaternary structure, directly interacts (via DUF1669) with CSNK1A1 and CSNK1A1L. May interact with RAF1. Phosphorylated by CSNK1A1.

It localises to the cytoplasm. In terms of biological role, may play a role in MAPK signaling. This is Protein FAM83C from Mus musculus (Mouse).